Consider the following 129-residue polypeptide: MARQIKRAANKKKKTAPTGVAHIQSTFNNTIVTITTVTGETVSWASSGAIGFKGAKKGTPFAAQIAAEKASKEAMSQGMKKAEVLVNGPGAGRETAVRALQAAGLEITLIRDITPVPHNGCRPPKKRRV.

The protein belongs to the universal ribosomal protein uS11 family. In terms of assembly, part of the 30S ribosomal subunit.

The protein localises to the plastid. It localises to the chloroplast. The polypeptide is Small ribosomal subunit protein uS11c (Rhodomonas salina (Cryptomonas salina)).